The chain runs to 59 residues: Large ribosomal subunit protein uL30 (59 aa).

The protein belongs to the universal ribosomal protein uL30 family. In terms of assembly, part of the 50S ribosomal subunit.

This chain is Large ribosomal subunit protein uL30, found in Pectobacterium atrosepticum (strain SCRI 1043 / ATCC BAA-672) (Erwinia carotovora subsp. atroseptica).